The sequence spans 373 residues: GTPase Obg (373 aa).

The Obg domain occupies 1–158 (MFVDSVELLI…KQVRLEMKLI (158 aa)). Positions 62 to 83 (NHIKAENGRPGEGRKKYGRKGQ) are disordered. Residues 64–76 (IKAENGRPGEGRK) show a composition bias toward basic and acidic residues. An OBG-type G domain is found at 159 to 362 (ADVGLVGYPN…LRYALGDFVK (204 aa)). Residues 165 to 172 (GYPNVGKS), 190 to 194 (FTTLT), 212 to 215 (DIPG), 280 to 283 (TKID), and 343 to 345 (SSV) each bind GTP. Residues Ser172 and Thr192 each contribute to the Mg(2+) site.

Belongs to the TRAFAC class OBG-HflX-like GTPase superfamily. OBG GTPase family. As to quaternary structure, monomer. It depends on Mg(2+) as a cofactor.

Its subcellular location is the cytoplasm. In terms of biological role, an essential GTPase which binds GTP, GDP and possibly (p)ppGpp with moderate affinity, with high nucleotide exchange rates and a fairly low GTP hydrolysis rate. Plays a role in control of the cell cycle, stress response, ribosome biogenesis and in those bacteria that undergo differentiation, in morphogenesis control. This Sulfurovum sp. (strain NBC37-1) protein is GTPase Obg.